The following is a 286-amino-acid chain: Probable 4-deoxy-4-formamido-L-arabinose-phosphoundecaprenol deformylase ArnD (286 aa).

One can recognise a NodB homology domain in the interval 1–248; it reads MGTKLGVPNL…IAINEGINFC (248 aa).

The protein belongs to the polysaccharide deacetylase family. ArnD deformylase subfamily.

It carries out the reaction 4-deoxy-4-formamido-alpha-L-arabinopyranosyl di-trans,octa-cis-undecaprenyl phosphate + H2O = 4-amino-4-deoxy-alpha-L-arabinopyranosyl di-trans,octa-cis-undecaprenyl phosphate + formate. Its pathway is glycolipid biosynthesis; 4-amino-4-deoxy-alpha-L-arabinose undecaprenyl phosphate biosynthesis; 4-amino-4-deoxy-alpha-L-arabinose undecaprenyl phosphate from UDP-4-deoxy-4-formamido-beta-L-arabinose and undecaprenyl phosphate: step 2/2. It functions in the pathway bacterial outer membrane biogenesis; lipopolysaccharide biosynthesis. Its function is as follows. Catalyzes the deformylation of 4-deoxy-4-formamido-L-arabinose-phosphoundecaprenol to 4-amino-4-deoxy-L-arabinose-phosphoundecaprenol. The modified arabinose is attached to lipid A and is required for resistance to polymyxin and cationic antimicrobial peptides. The polypeptide is Probable 4-deoxy-4-formamido-L-arabinose-phosphoundecaprenol deformylase ArnD (Wigglesworthia glossinidia brevipalpis).